A 463-amino-acid polypeptide reads, in one-letter code: ATP synthase subunit beta (463 aa).

152-159 contributes to the ATP binding site; it reads GGAGVGKT.

The protein belongs to the ATPase alpha/beta chains family. In terms of assembly, F-type ATPases have 2 components, CF(1) - the catalytic core - and CF(0) - the membrane proton channel. CF(1) has five subunits: alpha(3), beta(3), gamma(1), delta(1), epsilon(1). CF(0) has three main subunits: a(1), b(2) and c(9-12). The alpha and beta chains form an alternating ring which encloses part of the gamma chain. CF(1) is attached to CF(0) by a central stalk formed by the gamma and epsilon chains, while a peripheral stalk is formed by the delta and b chains.

Its subcellular location is the cell inner membrane. It carries out the reaction ATP + H2O + 4 H(+)(in) = ADP + phosphate + 5 H(+)(out). In terms of biological role, produces ATP from ADP in the presence of a proton gradient across the membrane. The catalytic sites are hosted primarily by the beta subunits. This chain is ATP synthase subunit beta, found in Shewanella sp. (strain MR-7).